A 635-amino-acid polypeptide reads, in one-letter code: Threonine--tRNA ligase (635 aa).

In terms of domain architecture, TGS spans 1–61 (MIKITLKDGK…HKDSSLEILT (61 aa)). Positions 242–532 (DHRKLGKELD…LIEQYAGAFP (291 aa)) are catalytic. Zn(2+) contacts are provided by Cys333, His384, and His509.

The protein belongs to the class-II aminoacyl-tRNA synthetase family. In terms of assembly, homodimer. Requires Zn(2+) as cofactor.

It is found in the cytoplasm. It carries out the reaction tRNA(Thr) + L-threonine + ATP = L-threonyl-tRNA(Thr) + AMP + diphosphate + H(+). In terms of biological role, catalyzes the attachment of threonine to tRNA(Thr) in a two-step reaction: L-threonine is first activated by ATP to form Thr-AMP and then transferred to the acceptor end of tRNA(Thr). Also edits incorrectly charged L-seryl-tRNA(Thr). The protein is Threonine--tRNA ligase of Clostridium botulinum (strain 657 / Type Ba4).